A 392-amino-acid chain; its full sequence is Quinolinate synthase (392 aa).

A disordered region spans residues 1-23; the sequence is MVDLPTTTPPAQPTTGNDEVDAL. 2 residues coordinate iminosuccinate: H57 and S74. C131 lines the [4Fe-4S] cluster pocket. Iminosuccinate-binding positions include 163–165 and S184; that span reads YIN. Residue C254 participates in [4Fe-4S] cluster binding. Residues 280-282 and T297 contribute to the iminosuccinate site; that span reads HPE. Residue C344 participates in [4Fe-4S] cluster binding.

The protein belongs to the quinolinate synthase family. Type 3 subfamily. It depends on [4Fe-4S] cluster as a cofactor.

It localises to the cytoplasm. The enzyme catalyses iminosuccinate + dihydroxyacetone phosphate = quinolinate + phosphate + 2 H2O + H(+). It functions in the pathway cofactor biosynthesis; NAD(+) biosynthesis; quinolinate from iminoaspartate: step 1/1. Catalyzes the condensation of iminoaspartate with dihydroxyacetone phosphate to form quinolinate. This Rhodopirellula baltica (strain DSM 10527 / NCIMB 13988 / SH1) protein is Quinolinate synthase.